Consider the following 288-residue polypeptide: Adenylate kinase (288 aa).

Position 65 to 70 (glycine 65 to threonine 70) interacts with ATP. Residues alanine 85–valine 114 are NMP. AMP-binding positions include threonine 86, arginine 91, lysine 112–valine 114, glycine 142–arginine 145, and glutamine 149. Positions glycine 178 to aspartate 226 are LID. Arginine 179 serves as a coordination point for ATP. Arginine 223 and arginine 234 together coordinate AMP. Glycine 262 is a binding site for ATP.

This sequence belongs to the adenylate kinase family. Monomer.

The protein resides in the cytoplasm. The catalysed reaction is AMP + ATP = 2 ADP. In terms of biological role, catalyzes the reversible transfer of the terminal phosphate group between ATP and AMP. Plays an important role in cellular energy homeostasis and in adenine nucleotide metabolism. This chain is Adenylate kinase (ADK), found in Solanum tuberosum (Potato).